The primary structure comprises 395 residues: S-adenosylmethionine synthase (395 aa).

His15 is an ATP binding site. Mg(2+) is bound at residue Asp17. Glu43 serves as a coordination point for K(+). Gln99 contacts L-methionine. The segment at 99 to 109 (QSPDIAMGVNE) is flexible loop. Residues 174 to 176 (DGK), 240 to 241 (RF), Asp249, 255 to 256 (RK), Ala272, and Lys276 contribute to the ATP site. Asp249 contacts L-methionine. An L-methionine-binding site is contributed by Lys280.

This sequence belongs to the AdoMet synthase family. In terms of assembly, homotetramer; dimer of dimers. Mg(2+) serves as cofactor. It depends on K(+) as a cofactor.

Its subcellular location is the cytoplasm. The catalysed reaction is L-methionine + ATP + H2O = S-adenosyl-L-methionine + phosphate + diphosphate. It participates in amino-acid biosynthesis; S-adenosyl-L-methionine biosynthesis; S-adenosyl-L-methionine from L-methionine: step 1/1. Its function is as follows. Catalyzes the formation of S-adenosylmethionine (AdoMet) from methionine and ATP. The overall synthetic reaction is composed of two sequential steps, AdoMet formation and the subsequent tripolyphosphate hydrolysis which occurs prior to release of AdoMet from the enzyme. The chain is S-adenosylmethionine synthase from Moorella thermoacetica (strain ATCC 39073 / JCM 9320).